The primary structure comprises 422 residues: Choline monooxygenase, chloroplastic (422 aa).

A chloroplast-targeting transit peptide spans 1 to 47; it reads MMTTLTATVPEFLPPSLKSTRGYFNSHSEFGVSISKFSRRRFHNPTR. One can recognise a Rieske domain in the interval 96-203; sequence WQAVGYSDQI…VAVWGPFVLL (108 aa). Residues Cys138, His140, Cys157, and His160 each coordinate [2Fe-2S] cluster. Fe cation is bound by residues His269 and His274.

Belongs to the choline monooxygenase family. [2Fe-2S] cluster is required as a cofactor. The cofactor is Fe cation. It depends on Mg(2+) as a cofactor.

The protein localises to the plastid. The protein resides in the chloroplast stroma. The enzyme catalyses choline + 2 reduced [2Fe-2S]-[ferredoxin] + O2 + 2 H(+) = betaine aldehyde hydrate + 2 oxidized [2Fe-2S]-[ferredoxin] + H2O. The protein operates within amine and polyamine biosynthesis; betaine biosynthesis via choline pathway; betaine aldehyde from choline (monooxygenase route): step 1/1. Its function is as follows. Catalyzes the first step of the osmoprotectant glycine betaine synthesis. The protein is Choline monooxygenase, chloroplastic of Arabidopsis thaliana (Mouse-ear cress).